We begin with the raw amino-acid sequence, 553 residues long: Solute carrier family 22 member 12 (553 aa).

The helical transmembrane segment at 10–30 threads the bilayer; the sequence is VGGLGRFQLFQTVALVTPILW. Asn56 is a glycosylation site (N-linked (GlcNAc...) asparagine). 11 consecutive transmembrane segments (helical) span residues 146–166, 182–202, 204–224, 232–252, 260–280, 351–371, 378–398, 412–432, 435–455, 466–486, and 495–515; these read PMAQ…CGHA, LVSV…YCLF, FLLA…LMEW, LVMT…GSVA, MLQL…WWLP, IISM…ALDL, IFLL…GSLL, FLVL…GMGV, SALA…ITIF, MTAV…GPLV, and WMPL…ALLL. Ser534 is modified (phosphoserine). Thr542 bears the Phosphothreonine mark.

The protein belongs to the major facilitator (TC 2.A.1) superfamily. Organic cation transporter (TC 2.A.1.19) family. In terms of assembly, interacts with PDZK1. In terms of processing, N-glycosylated. In terms of tissue distribution, detected in kidney (at protein level). Detected in kidney cortex, in proximal tubules.

It is found in the apical cell membrane. The catalysed reaction is urate(out) + (S)-lactate(in) = urate(in) + (S)-lactate(out). It carries out the reaction nicotinate(in) + urate(out) = nicotinate(out) + urate(in). It catalyses the reaction urate(out) + n chloride(in) = urate(in) + n chloride(out). The enzyme catalyses orotate(out) + nicotinate(in) = orotate(in) + nicotinate(out). In terms of biological role, electroneutral antiporter that translocates urate across the apical membrane of proximal tubular cells in exchange for monovalent organic or inorganic anions. Involved in renal reabsorption of urate and helps maintaining blood levels of uric acid. Mediates urate uptake by an exchange with organic anions such as (S)-lactate and nicotinate, and inorganic anion Cl(-). Other inorganic anions such as Br(-), I(-) and NO3(-) may also act as counteranions that exchange for urate. Also mediates orotate tubular uptake coupled with nicotinate efflux and to a lesser extent with lactate efflux, therefore displaying a potential role in orotate renal reabsorption. Orotate transport is Cl(-)-dependent. In Mus musculus (Mouse), this protein is Solute carrier family 22 member 12.